We begin with the raw amino-acid sequence, 265 residues long: Protein ENDO16 (265 aa).

The short motif at 25 to 27 (RGD) is the Cell attachment site element. Positions 71-265 (SPNAPSSQME…KEEEEEERSG (195 aa)) are disordered. A compositionally biased stretch (polar residues) spans 73–92 (NAPSSQMESEGSANPSTIGS). 4 consecutive repeat copies span residues 75-94 (PSSQMESEGSANPSTIGSVS), 105-124 (ESERSESEGSEGEDSEETEG), 128-147 (PHEQMESEGGDQEESEGAEQ), and 148-167 (PQEQMESEGQEPESEEDVDS). Residues 75 to 257 (PSSQMESEGS…QSESEDPEKE (183 aa)) are 6 X approximate repeats. Acidic residues-rich tracts occupy residues 112–125 (EGSEGEDSEETEGA), 133–144 (ESEGGDQEESEG), 152–169 (MESEGQEPESEEDVDSGE), 194–212 (EVDEQTSDGEEPEEPEEPG), 222–243 (ESEGEGNESEEEEVEEPQEVIE), and 250–265 (ESEDPEKEEEEEERSG). 2 tandem repeats follow at residues 217–236 (PHEQMESEGEGNESEEEEVE) and 238–257 (PQEVIESEGQQSESEDPEKE). An N-linked (GlcNAc...) asparagine glycan is attached at Asn228.

In terms of tissue distribution, first expressed in the vegetal plate and progressively the expression becomes restricted to a subset of endodermal cells as development proceeds.

May be an adhesion molecule involved in gastrulation of the sea urchin embryo. The polypeptide is Protein ENDO16 (ENDO16) (Strongylocentrotus purpuratus (Purple sea urchin)).